A 38-amino-acid chain; its full sequence is Large ribosomal subunit protein bL36c (38 aa).

This sequence belongs to the bacterial ribosomal protein bL36 family.

The protein localises to the plastid. Its subcellular location is the chloroplast. This chain is Large ribosomal subunit protein bL36c (rpl36), found in Mesostigma viride (Green alga).